The chain runs to 415 residues: Imidazolonepropionase (415 aa).

Histidine 74 and histidine 76 together coordinate Fe(3+). Zn(2+) contacts are provided by histidine 74 and histidine 76. 4-imidazolone-5-propanoate contacts are provided by arginine 83, tyrosine 146, and histidine 179. Tyrosine 146 lines the N-formimidoyl-L-glutamate pocket. Histidine 244 contacts Fe(3+). Histidine 244 provides a ligand contact to Zn(2+). Glutamine 247 lines the 4-imidazolone-5-propanoate pocket. Aspartate 319 serves as a coordination point for Fe(3+). Residue aspartate 319 participates in Zn(2+) binding. The N-formimidoyl-L-glutamate site is built by asparagine 321 and glycine 323. Residue threonine 324 coordinates 4-imidazolone-5-propanoate.

This sequence belongs to the metallo-dependent hydrolases superfamily. HutI family. Zn(2+) is required as a cofactor. The cofactor is Fe(3+).

Its subcellular location is the cytoplasm. It carries out the reaction 4-imidazolone-5-propanoate + H2O = N-formimidoyl-L-glutamate. It functions in the pathway amino-acid degradation; L-histidine degradation into L-glutamate; N-formimidoyl-L-glutamate from L-histidine: step 3/3. Functionally, catalyzes the hydrolytic cleavage of the carbon-nitrogen bond in imidazolone-5-propanoate to yield N-formimidoyl-L-glutamate. It is the third step in the universal histidine degradation pathway. This is Imidazolonepropionase from Cupriavidus metallidurans (strain ATCC 43123 / DSM 2839 / NBRC 102507 / CH34) (Ralstonia metallidurans).